Reading from the N-terminus, the 304-residue chain is Dihydroorotate dehydrogenase B (NAD(+)), catalytic subunit (304 aa).

FMN contacts are provided by residues S21 and 45–46 (KA). Residues K45 and 69–73 (NAIGL) each bind substrate. 2 residues coordinate FMN: N99 and N127. N127 is a binding site for substrate. C130 (nucleophile) is an active-site residue. The FMN site is built by K165 and I191. 192 to 193 (NT) serves as a coordination point for substrate. FMN is bound by residues G217, 243 to 244 (GG), and 265 to 266 (GT).

This sequence belongs to the dihydroorotate dehydrogenase family. Type 1 subfamily. As to quaternary structure, heterotetramer of 2 PyrK and 2 PyrD type B subunits. Requires FMN as cofactor.

It is found in the cytoplasm. It carries out the reaction (S)-dihydroorotate + NAD(+) = orotate + NADH + H(+). It functions in the pathway pyrimidine metabolism; UMP biosynthesis via de novo pathway; orotate from (S)-dihydroorotate (NAD(+) route): step 1/1. Catalyzes the conversion of dihydroorotate to orotate with NAD(+) as electron acceptor. The protein is Dihydroorotate dehydrogenase B (NAD(+)), catalytic subunit (pyrD) of Shouchella clausii (strain KSM-K16) (Alkalihalobacillus clausii).